A 398-amino-acid polypeptide reads, in one-letter code: Streptopain (398 aa).

An N-terminal signal peptide occupies residues Met-1–Ala-27. A propeptide spanning residues Asp-28 to Lys-145 is cleaved from the precursor. Cys-192 (nucleophile) is an active-site residue. Cys-192 carries the cysteine methyl disulfide; in zymogen form modification. 2 residues coordinate a protein: Ser-282 and Gly-339. His-340 functions as the Proton acceptor in the catalytic mechanism. Residues Arg-368–Gln-390 form a C-terminal active site loop region.

This sequence belongs to the peptidase C10 family. Monomer. The mature protease is derived from the precursor sequence by cleavage, either in cis via an autocatalytic mechanism, or in trans by mature SpeB or host proteases (trypsin, plasmin or subtilisin). Maturation can involve a number of protein cleavage intermediates. Mature SpeB probably plays the most important role in protein maturation in physiological conditions. In terms of processing, methylthiolation at Cys-192 of the inactive zymogen form is probably involved in the mechanism of secretion of the proteinase into the culture fluid.

The protein resides in the secreted. Its subcellular location is the host extracellular space. It is found in the host cytoplasm. The catalysed reaction is Preferential cleavage with hydrophobic residues at P2, P1 and P1'.. Synthesized as an inactive zymogen to protect the intracellular components of the bacteria from proteolytic activity during protein production. Once secreted into the extracellular milieu, cleaved into the active protease: maturation can be mediated in cis by autocatalytic cleavage, or in trans by mature SpeB or host proteases. Protease activity is strongly inhibited by zinc and copper, which prevent its maturation into an active protease: inhibition by metal ions may be required to prevent proteolysis of streptococcal proteins. Its function is as follows. Cysteine protease that acts as a key streptococcal virulence factor by cleaving host proteins involved in immune response. Triggers inflammation by mediating cleavage of host proteins, which can both promote host pathogenesis by triggering sterile inflammation and/or restrict streptococcal infection, depending on host immune statue and infection site. Cleaves host gasdermin-A (GSDMA) in epithelial cells, promoting GSDMA activation and formation of gasdermin pores, triggering pyroptosis. Pyroptosis triggers the elimination of the infected skin cell, depriving the pathogen of its protective niche, while inducing an inflammatory response. This ultimately prevents bacterial penetration of the epithelial barrier and a subsequent systemic dissemination of the pathogen. Also mediates cleavage of the cytokine precursor interleukin-1 beta (IL1B) to its mature form, resulting in inflammation and septic shock. SpeB-mediated maturation of IL1B plays a dual role depending on infection site: while IL1B inflammatory response prevents bacterial growth during invasive skin infections, it promotes streptococcal infection of the nasopharynx by disrupting colonization resistance mediated by the microbiota. Inhibits host autophagy be catalyzing cleavage and inactivation of key autophagy factors, such as CALCOCO2, NBR1 and SQSTM1. Cleaves and inhibits a number of complement factors, such as C2, C3-beta chain of C3, C4, C5 or SERPING1, thereby promoting evasion of host immunity. May also impair adaptive immunity by catalyzing cleavage and degradation of host immunoglobulins to promote immune system evasion; the relevance of this activity is however unsure in vivo. Catalyzes maturation and release of the peptide hormone bradykinin from the precursor Kininogen-1 (KNG1) to produce hypotension during septic shock. Also involved in bacterial translocation across the host epithelial barrier by mediating cleavage and degradation of host epithelial junction proteins, such as CDH1 and OCLN. Additionally, has been involved in degradation of fibronectin and vitronectin, two host extracellular matrix proteins involved in tissue integrity. Also able to catalyze cleavage and degradation of streptococcal proteins, such as C5a peptidase, EndoS or SmeZ. Degradation of streptococcal proteins is however strictly regulated to preserve integrity of other virulence factors. The protein is Streptopain (speB) of Streptococcus pyogenes serotype M3 (strain ATCC BAA-595 / MGAS315).